The following is a 69-amino-acid chain: uncharacterized protein (69 aa).

A signal peptide spans 1–16; that stretch reads MSLGLIFALLLTHAAA.

This is an uncharacterized protein from Archaeoglobus fulgidus (strain ATCC 49558 / DSM 4304 / JCM 9628 / NBRC 100126 / VC-16).